The following is a 460-amino-acid chain: uncharacterized protein (460 aa).

The segment at residues 1 to 33 is a signal peptide (tat-type signal); that stretch reads MKESNSRREFLSQSGKMVTAAALFGTSVPLAHA.

It belongs to the metallo-dependent hydrolases superfamily. In terms of processing, exported by the Tat system. The position of the signal peptide cleavage has not been experimentally proven. Can also be exported by the Sec system.

This is an uncharacterized protein from Escherichia coli (strain K12).